We begin with the raw amino-acid sequence, 845 residues long: Beta-mannosidase B (845 aa).

The active-site Proton donor is the Glu-432. Residues Asn-717 and Asn-723 are each glycosylated (N-linked (GlcNAc...) asparagine).

Belongs to the glycosyl hydrolase 2 family. Beta-mannosidase B subfamily.

The catalysed reaction is Hydrolysis of terminal, non-reducing beta-D-mannose residues in beta-D-mannosides.. It functions in the pathway glycan metabolism; N-glycan degradation. In terms of biological role, exoglycosidase that cleaves the single beta-linked mannose residue from the non-reducing end of beta-mannosidic oligosaccharides of various complexity and length. Prefers mannobiose over mannotriose and has no activity against polymeric mannan. Is also severely restricted by galactosyl substitutions at the +1 subsite. The chain is Beta-mannosidase B (mndB) from Aspergillus clavatus (strain ATCC 1007 / CBS 513.65 / DSM 816 / NCTC 3887 / NRRL 1 / QM 1276 / 107).